The sequence spans 235 residues: MKNLLKLSAIAILAASAVSTFASNKEPYTEQGTNAREMTEQKPIHWISVEQLKKELEGKAPINVSFDIDDTVLFSSPCFYHGQEKYSPGKNDYLKNQDFWNEVNAGCDQYSIPKQIAVDLINMHQARGDQIYFITGRTAGDKDGVTPVLQKAFNIKDMHPVEFMGGRKLPTKYNKTPGIIEHKVSIHYGDSDDDILAAKEAGIRGIRLMRAANSTYQPMPTLGGYGEEVLINSNY.

Residues 1–22 (MKNLLKLSAIAILAASAVSTFA) form the signal peptide. Residue Asp-67 is the Nucleophile of the active site. Residues Asp-67 and Asp-69 each contribute to the Mg(2+) site. Asp-69 (proton donor) is an active-site residue. Substrate contacts are provided by residues 135 to 136 (TG) and Lys-175. Asp-190 serves as a coordination point for Mg(2+).

The protein belongs to the class B bacterial acid phosphatase family. As to quaternary structure, homotetramer. The cofactor is Mg(2+).

Its subcellular location is the periplasm. The catalysed reaction is a phosphate monoester + H2O = an alcohol + phosphate. In terms of biological role, dephosphorylates several organic phosphate monoesters. Also has a phosphotransferase activity catalyzing the transfer of low-energy phosphate groups from organic phosphate monoesters to free hydroxyl groups of various organic compounds. The chain is Class B acid phosphatase from Haemophilus parainfluenzae (strain T3T1).